We begin with the raw amino-acid sequence, 337 residues long: Quinolinate synthase (337 aa).

The iminosuccinate site is built by histidine 40 and serine 57. Cysteine 102 lines the [4Fe-4S] cluster pocket. Iminosuccinate is bound by residues 128–130 (YVN) and serine 145. A [4Fe-4S] cluster-binding site is contributed by cysteine 189. Iminosuccinate-binding positions include 215-217 (HPE) and threonine 243. Position 288 (cysteine 288) interacts with [4Fe-4S] cluster.

This sequence belongs to the quinolinate synthase family. Type 2 subfamily. [4Fe-4S] cluster serves as cofactor.

It localises to the cytoplasm. It catalyses the reaction iminosuccinate + dihydroxyacetone phosphate = quinolinate + phosphate + 2 H2O + H(+). The protein operates within cofactor biosynthesis; NAD(+) biosynthesis; quinolinate from iminoaspartate: step 1/1. In terms of biological role, catalyzes the condensation of iminoaspartate with dihydroxyacetone phosphate to form quinolinate. This chain is Quinolinate synthase, found in Mycobacterium sp. (strain JLS).